A 210-amino-acid polypeptide reads, in one-letter code: Redox-sensing transcriptional repressor Rex (210 aa).

Positions 16 to 55 form a DNA-binding region, H-T-H motif; that stretch reads IYSRFLKRLDKKGITTVSSGDIAEGVGVSPAQVRKDLAYF. 90–95 provides a ligand contact to NAD(+); the sequence is GAGNLG.

This sequence belongs to the transcriptional regulatory Rex family. Homodimer.

Its subcellular location is the cytoplasm. Modulates transcription in response to changes in cellular NADH/NAD(+) redox state. This Desulforamulus reducens (strain ATCC BAA-1160 / DSM 100696 / MI-1) (Desulfotomaculum reducens) protein is Redox-sensing transcriptional repressor Rex.